The primary structure comprises 145 residues: Deoxyuridine 5'-triphosphate nucleotidohydrolase (145 aa).

Substrate-binding positions include 63 to 65, Q76, and 80 to 82; these read RSG and TVD.

It belongs to the dUTPase family. Requires Mg(2+) as cofactor.

It carries out the reaction dUTP + H2O = dUMP + diphosphate + H(+). The protein operates within pyrimidine metabolism; dUMP biosynthesis; dUMP from dCTP (dUTP route): step 2/2. Its function is as follows. This enzyme is involved in nucleotide metabolism: it produces dUMP, the immediate precursor of thymidine nucleotides and it decreases the intracellular concentration of dUTP so that uracil cannot be incorporated into DNA. This Chlamydia trachomatis serovar L2 (strain ATCC VR-902B / DSM 19102 / 434/Bu) protein is Deoxyuridine 5'-triphosphate nucleotidohydrolase.